A 335-amino-acid polypeptide reads, in one-letter code: tRNA (guanine(6)-N2)-methyltransferase (335 aa).

The 104-residue stretch at Glu47 to Leu150 folds into the THUMP domain. S-adenosyl-L-methionine contacts are provided by residues Ser195 to Thr197, Asp243 to Ala244, and Asn260.

The protein belongs to the methyltransferase superfamily. In terms of assembly, monomer in solution.

The protein resides in the cytoplasm. The catalysed reaction is guanosine(6) in tRNA + S-adenosyl-L-methionine = N(2)-methylguanosine(6) in tRNA + S-adenosyl-L-homocysteine + H(+). Its function is as follows. S-adenosyl-L-methionine-dependent methyltransferase that catalyzes the methylation of the guanosine nucleotide at position 6 (m2G6) in tRNA(Phe). The protein is tRNA (guanine(6)-N2)-methyltransferase of Thermus thermophilus (strain ATCC BAA-163 / DSM 7039 / HB27).